The primary structure comprises 213 residues: Putative manganese efflux pump MntP (213 aa).

7 helical membrane-spanning segments follow: residues 6–26 (LGVLAVGLGADAFSMALGIGM), 34–54 (AFMLGLVVALFHIFMPWFGIL), 58–78 (ALGLVVGRLASFIGAAVLFFL), 107–127 (GSGGGAIVGAGAIVGGRLFAP), 132–152 (LVVIGAAVSMDALSVGFSLGT), 153–173 (VGAQLLPTVLTFGVVAGIMTV), and 192–212 (LAGGLILLGIGIKLLLGSASP).

Belongs to the MntP (TC 9.B.29) family.

The protein localises to the cell membrane. In terms of biological role, probably functions as a manganese efflux pump. This is Putative manganese efflux pump MntP from Heliobacterium modesticaldum (strain ATCC 51547 / Ice1).